We begin with the raw amino-acid sequence, 161 residues long: Periplasmic chaperone Spy (161 aa).

The N-terminal stretch at 1-23 (MRKLTALFVASTLALGAANLAHA) is a signal peptide. Residues 140 to 161 (ANFEKRLTERPAAKGKMPATAE) form a disordered region. Over residues 142–151 (FEKRLTERPA) the composition is skewed to basic and acidic residues.

This sequence belongs to the CpxP/Spy family. Homodimer.

The protein localises to the periplasm. An ATP-independent periplasmic chaperone, decreases protein aggregation and helps protein refolding. Binds substrate over a large region of its convex inner surface. Substrate protein folds while it is bound to chaperone. Increasing Spy flexibility increases its substrate affinity and overall chaperone activity (shown for 3 different substrates). Protects proteins in vitro against tannin inactivation; tannins have antimicrobial activity. Overexpression enhances the stability of otherwise unstable periplasmic proteins. This is Periplasmic chaperone Spy from Escherichia coli (strain K12).